The sequence spans 335 residues: Nucleoid-associated protein YejK (335 aa).

It belongs to the YejK family.

The protein resides in the cytoplasm. It localises to the nucleoid. In Shigella dysenteriae serotype 1 (strain Sd197), this protein is Nucleoid-associated protein YejK.